Here is an 840-residue protein sequence, read N- to C-terminus: Putative pentatricopeptide repeat-containing protein At1g31840 (840 aa).

PPR repeat units follow at residues 98 to 128 (KDPS…MITN), 145 to 179 (DADV…GVVI), 180 to 214 (PQDS…GIEP), 216 to 250 (GVSA…GFRV), 251 to 284 (GIVS…GPAP), 285 to 319 (NVVT…GIEP), 320 to 354 (DLIA…GVKL), 355 to 389 (DVVV…GISP), 390 to 424 (NVVT…GMEP), 425 to 459 (SIVT…GYPP), 460 to 494 (DVVI…SIRL), 495 to 529 (NVVV…GIKP), 530 to 564 (DVAT…GLEP), 565 to 599 (DALA…KISA), 600 to 634 (DIAV…KMEP), 635 to 669 (DIVT…PFGP), 670 to 704 (NTVT…GSKP), 705 to 739 (NAVT…GISP), 740 to 774 (SIVS…KLLP), and 775 to 809 (DVVA…GVKP).

Belongs to the PPR family. P subfamily.

In Arabidopsis thaliana (Mouse-ear cress), this protein is Putative pentatricopeptide repeat-containing protein At1g31840.